The sequence spans 215 residues: RNA pyrophosphohydrolase (215 aa).

The region spanning Gly6 to Thr149 is the Nudix hydrolase domain. The Nudix box signature appears at Gly38–Gly59.

Belongs to the Nudix hydrolase family. RppH subfamily. The cofactor is a divalent metal cation.

Accelerates the degradation of transcripts by removing pyrophosphate from the 5'-end of triphosphorylated RNA, leading to a more labile monophosphorylated state that can stimulate subsequent ribonuclease cleavage. The protein is RNA pyrophosphohydrolase of Burkholderia multivorans (strain ATCC 17616 / 249).